Consider the following 345-residue polypeptide: Cell division control protein 2 homolog 2 (345 aa).

Positions methionine 1 to aspartate 44 are disordered. The 283-residue stretch at tyrosine 46–phenylalanine 328 folds into the Protein kinase domain. Residues valine 52–valine 60 and lysine 75 contribute to the ATP site. Serine 56 is subject to Phosphoserine. Tyrosine 57 is subject to Phosphotyrosine. Aspartate 168 serves as the catalytic Proton acceptor.

Belongs to the protein kinase superfamily. CMGC Ser/Thr protein kinase family. CDC2/CDKX subfamily. In terms of assembly, forms a stable but non-covalent complex with a regulatory subunit and with a cyclin.

It catalyses the reaction L-seryl-[protein] + ATP = O-phospho-L-seryl-[protein] + ADP + H(+). The enzyme catalyses L-threonyl-[protein] + ATP = O-phospho-L-threonyl-[protein] + ADP + H(+). Phosphorylation at Ser-56 or Tyr-57 inactivates the enzyme. Its function is as follows. Probably involved in the control of the cell cycle. The sequence is that of Cell division control protein 2 homolog 2 (CRK2) from Trypanosoma brucei brucei.